We begin with the raw amino-acid sequence, 81 residues long: Styelin-E (81 aa).

The first 22 residues, 1–22 (MQMKATILIVLVALFMIQQSEA), serve as a signal peptide directing secretion. Position 24 is a 6'-bromotryptophan (tryptophan 24). The residue at position 26 (arginine 26) is a 3,4-dihydroxyarginine. A 4,5-dihydroxylysine mark is found at lysine 27, lysine 30, and lysine 34. 3',4'-dihydroxyphenylalanine occurs at positions 36 and 37. Residue lysine 38 is modified to 4,5-dihydroxylysine. Position 40 is a 5-hydroxylysine (lysine 40). 3',4'-dihydroxyphenylalanine occurs at positions 41 and 42. Lysine 44 is modified (5-hydroxylysine). At leucine 54 the chain carries Leucine amide. Residues 56-81 (DMTDEEFQDFMKEVEQAREEELQSRQ) constitute a propeptide, removed in mature form.

In terms of processing, contains L-DOPA (3',4'-dihydroxyphenylalanine). In terms of tissue distribution, hemocytes and pharyngeal tissues.

The protein resides in the secreted. In terms of biological role, bactericidal against several Gram-positive and Gram-negative bacteria. The protein is Styelin-E of Styela clava (Sea squirt).